Consider the following 108-residue polypeptide: MQATKTHVRKGETVMVIAGKDKNKTGTVMQFLPKKDGIIVEGLNMVKRHVKARGNEPGGIKEKEASIHISNVMPYCAKCAKPVRVRLKVLENGDKQRLCAKCGNSLEK.

Belongs to the universal ribosomal protein uL24 family. As to quaternary structure, part of the 50S ribosomal subunit.

One of two assembly initiator proteins, it binds directly to the 5'-end of the 23S rRNA, where it nucleates assembly of the 50S subunit. Its function is as follows. One of the proteins that surrounds the polypeptide exit tunnel on the outside of the subunit. The protein is Large ribosomal subunit protein uL24 of Pelobacter propionicus (strain DSM 2379 / NBRC 103807 / OttBd1).